The chain runs to 157 residues: Small ribosomal subunit protein uS7 (157 aa).

It belongs to the universal ribosomal protein uS7 family. As to quaternary structure, part of the 30S ribosomal subunit. Contacts proteins S9 and S11.

One of the primary rRNA binding proteins, it binds directly to 16S rRNA where it nucleates assembly of the head domain of the 30S subunit. Is located at the subunit interface close to the decoding center, probably blocks exit of the E-site tRNA. In Marinomonas sp. (strain MWYL1), this protein is Small ribosomal subunit protein uS7.